Reading from the N-terminus, the 326-residue chain is Probable cell division protein WhiA (326 aa).

A DNA-binding region (H-T-H motif) is located at residues 275–308 (SLDELGHYADPPMTKDAVAGRIRRLLAMADKRAS).

It belongs to the WhiA family.

Functionally, involved in cell division and chromosome segregation. This Leifsonia xyli subsp. xyli (strain CTCB07) protein is Probable cell division protein WhiA.